The sequence spans 363 residues: 5-hydroxytryptamine receptor 1E (363 aa).

Topologically, residues 1-21 (MNITNCTTEASMAIRPKTITE) are extracellular. 2 N-linked (GlcNAc...) asparagine glycosylation sites follow: asparagine 2 and asparagine 5. Residues 22–45 (KMLICMTLVVITTLTTLLNLAVIM) form a helical membrane-spanning segment. The Cytoplasmic portion of the chain corresponds to 46–59 (AIGTTKKLHQPANY). A helical transmembrane segment spans residues 60 to 84 (LICSLAVTDLLVAVLVMPLSIIYIV). The Extracellular portion of the chain corresponds to 85–92 (MDRWKLGY). Residues 93 to 118 (FLCEVWLSVDMTCCTCSILHLCVIAL) form a helical membrane-spanning segment. Cysteines 95 and 173 form a disulfide. Positions 102 and 106 each coordinate serotonin. The DRY motif; important for ligand-induced conformation changes motif lies at 119–121 (DRY). Residues 119–138 (DRYWAITNAIEYARKRTAKR) are Cytoplasmic-facing. A helical transmembrane segment spans residues 139-157 (AALMILTVWTISIFISMPP). Residues 158–179 (LFWRSHRRLSPPPSQCTIQHDH) are Extracellular-facing. The chain crosses the membrane as a helical span at residues 180 to 203 (VIYTIYSTLGAFYIPLTLILILYY). The Cytoplasmic portion of the chain corresponds to 204–291 (RIYHAAKSLY…SSTRERKAAR (88 aa)). The helical transmembrane segment at 292–316 (ILGLILGAFILSWLPFFIKELIVGL) threads the bilayer. The Extracellular segment spans residues 317–322 (SIYTVS). The helical transmembrane segment at 323-345 (SEVADFLTWLGYVNSLINPLLYT) threads the bilayer. The NPxxY motif; important for ligand-induced conformation changes and signaling signature appears at 340 to 344 (NPLLY). Residues 346–363 (SFNEDFKLAFKKLIRCRE) are Cytoplasmic-facing.

It belongs to the G-protein coupled receptor 1 family.

It localises to the cell membrane. G-protein coupled receptor for 5-hydroxytryptamine (serotonin). Also functions as a receptor for various alkaloids and psychoactive substances. Ligand binding causes a conformation change that triggers signaling via guanine nucleotide-binding proteins (G proteins) and modulates the activity of downstream effectors, such as adenylate cyclase. HTR1E is coupled to G(i)/G(o) G alpha proteins and mediates inhibitory neurotransmission by inhibiting adenylate cyclase activity. This is 5-hydroxytryptamine receptor 1E (HTR1E) from Pan troglodytes (Chimpanzee).